A 393-amino-acid chain; its full sequence is Elongation factor Tu (393 aa).

Positions 10-203 (KPHVNIGTIG…AVDSFIPDPV (194 aa)) constitute a tr-type G domain. A G1 region spans residues 19–26 (GHVDHGKT). 19-26 (GHVDHGKT) is a GTP binding site. Mg(2+) is bound at residue Thr26. The interval 60 to 64 (GITIS) is G2. The tract at residues 81–84 (DCPG) is G3. GTP is bound by residues 81-85 (DCPGH) and 136-139 (NKVD). The tract at residues 136–139 (NKVD) is G4. The G5 stretch occupies residues 173 to 175 (SAL).

The protein belongs to the TRAFAC class translation factor GTPase superfamily. Classic translation factor GTPase family. EF-Tu/EF-1A subfamily. In terms of assembly, monomer.

Its subcellular location is the cytoplasm. The catalysed reaction is GTP + H2O = GDP + phosphate + H(+). Functionally, GTP hydrolase that promotes the GTP-dependent binding of aminoacyl-tRNA to the A-site of ribosomes during protein biosynthesis. The sequence is that of Elongation factor Tu from Pelodictyon phaeoclathratiforme (strain DSM 5477 / BU-1).